A 161-amino-acid chain; its full sequence is Transcriptional repressor NrdR (161 aa).

The disordered stretch occupies residues 1-23 (MRCPFCGHPDTQVKDSRPAEDGN). A zinc finger lies at 3-34 (CPFCGHPDTQVKDSRPAEDGNAIRRRRQCPSC). Residues 11 to 23 (TQVKDSRPAEDGN) show a composition bias toward basic and acidic residues. The 91-residue stretch at 49–139 (LTVMKKSGRR…VYKDFHKVED (91 aa)) folds into the ATP-cone domain.

The protein belongs to the NrdR family. The cofactor is Zn(2+).

Functionally, negatively regulates transcription of bacterial ribonucleotide reductase nrd genes and operons by binding to NrdR-boxes. The sequence is that of Transcriptional repressor NrdR from Maricaulis maris (strain MCS10) (Caulobacter maris).